We begin with the raw amino-acid sequence, 303 residues long: Aspartate carbamoyltransferase catalytic subunit (303 aa).

The carbamoyl phosphate site is built by Arg51 and Thr52. Lys80 provides a ligand contact to L-aspartate. Arg101, His129, and Gln132 together coordinate carbamoyl phosphate. Arg162 and Arg221 together coordinate L-aspartate. Leu260 and Pro261 together coordinate carbamoyl phosphate.

The protein belongs to the aspartate/ornithine carbamoyltransferase superfamily. ATCase family. As to quaternary structure, heterooligomer of catalytic and regulatory chains.

The enzyme catalyses carbamoyl phosphate + L-aspartate = N-carbamoyl-L-aspartate + phosphate + H(+). It functions in the pathway pyrimidine metabolism; UMP biosynthesis via de novo pathway; (S)-dihydroorotate from bicarbonate: step 2/3. In terms of biological role, catalyzes the condensation of carbamoyl phosphate and aspartate to form carbamoyl aspartate and inorganic phosphate, the committed step in the de novo pyrimidine nucleotide biosynthesis pathway. This chain is Aspartate carbamoyltransferase catalytic subunit, found in Saccharolobus islandicus (strain M.16.4 / Kamchatka #3) (Sulfolobus islandicus).